The sequence spans 406 residues: Peptidase T (406 aa).

His78 is a Zn(2+) binding site. Residue Asp80 is part of the active site. Asp139 contacts Zn(2+). Glu173 serves as the catalytic Proton acceptor. 3 residues coordinate Zn(2+): Glu174, Asp196, and His378.

This sequence belongs to the peptidase M20B family. Zn(2+) is required as a cofactor.

It localises to the cytoplasm. The catalysed reaction is Release of the N-terminal residue from a tripeptide.. In terms of biological role, cleaves the N-terminal amino acid of tripeptides. The polypeptide is Peptidase T (Clostridium perfringens (strain ATCC 13124 / DSM 756 / JCM 1290 / NCIMB 6125 / NCTC 8237 / Type A)).